We begin with the raw amino-acid sequence, 99 residues long: Indole-3-acetic acid-induced protein ARG2 (99 aa).

Residues 40-62 are disordered; sequence RGGASIGGNMVPKSGEEKVRGGE. The span at 53-62 shows a compositional bias: basic and acidic residues; that stretch reads SGEEKVRGGE.

This is Indole-3-acetic acid-induced protein ARG2 (ARG2) from Vigna radiata var. radiata (Mung bean).